Reading from the N-terminus, the 265-residue chain is Acrosomal protein SP-10 (265 aa).

The N-terminal stretch at 1 to 21 (MNRFLLLMSLYLLGSARGTSS) is a signal peptide. A disordered region spans residues 62–181 (LNTLSEHGSS…EQASGAPISS (120 aa)). 16 repeat units span residues 66 to 70 (SEHGS), 71 to 75 (SEHGS), 85 to 88 (SGEH), 91 to 95 (SEHAS), 110 to 114 (VGEQP), 115 to 119 (SGEQP), 120 to 123 (SGEH), 125 to 129 (SGEQP), 135 to 139 (SGEQP), 140 to 144 (SDEQP), 145 to 148 (SGEH), 150 to 154 (SGEQP), 155 to 159 (SGEQA), 160 to 164 (SGEQP), 165 to 168 (SGEH), and 170 to 174 (SGEQA). Residues 66–95 (SEHGSSEHGSSKHTVAEHTSGEHAESEHAS) form a 3 X 5 AA repeats of S-E-H-[GA]-S region. Residues 69 to 110 (GSSEHGSSKHTVAEHTSGEHAESEHASGEPAATEHAEGEHTV) are compositionally biased toward basic and acidic residues. Residues 85–168 (SGEHAESEHA…ASGEQPSGEH (84 aa)) form a 4 X 4 AA repeats of S-G-E-H region. A 9 X 5 AA repeats of [SV]-G-E-Q-[PSA] region spans residues 110–174 (VGEQPSGEQP…SGEHASGEQA (65 aa)). Residues 152–163 (EQPSGEQASGEQ) are compositionally biased toward polar residues. Asn-258 carries an N-linked (GlcNAc...) asparagine glycan.

Testis.

It is found in the cytoplasmic vesicle. The protein resides in the secretory vesicle. The protein localises to the acrosome. The chain is Acrosomal protein SP-10 (ACRV1) from Homo sapiens (Human).